Reading from the N-terminus, the 251-residue chain is uncharacterized protein (251 aa).

5 helical membrane-spanning segments follow: residues 22–42 (FLGV…DIVI), 86–106 (FFLS…VILA), 120–140 (LASS…AGIV), 157–177 (LGYF…IPYV), and 205–225 (IVAW…SFLA).

The protein localises to the cell membrane. This is an uncharacterized protein from Mycoplasma pneumoniae (strain ATCC 29342 / M129 / Subtype 1) (Mycoplasmoides pneumoniae).